A 445-amino-acid polypeptide reads, in one-letter code: FAS-associated factor 2 (445 aa).

Alanine 2 carries the post-translational modification N-acetylalanine. One can recognise a UBA domain in the interval 12-48 (EQTEKLLQFQDLTGIESMDQCRHTLEQHNWNIEAAVQ). At lysine 167 the chain carries N6-acetyllysine. A coiled-coil region spans residues 275-350 (SERLEREERN…EEKERKLECL (76 aa)). The interval 299–361 (ASLRADQEKE…PEPSPDDPES (63 aa)) is disordered. Residues 303–348 (ADQEKERKKREERERKRRKEEEVQQQKLAEERRRRNLQEEKERKLE) show a composition bias toward basic and acidic residues. The 83-residue stretch at 357–439 (DDPESVKIIF…GLSHTEVLFV (83 aa)) folds into the UBX domain.

Identified in a complex that contains SEL1L, OS9, FAF2/UBXD8, UBE2J1/UBC6E and AUP1. Interacts with YOD1. Interacts (via N-terminus) with UBQLN2 (via C-terminus). Interacts with PNPLA2 and UBAC2. Interacts with ZFAND2B; probably through VCP. Interacts with LMBR1L.

It localises to the cytoplasm. The protein localises to the lipid droplet. It is found in the endoplasmic reticulum. Plays an important role in endoplasmic reticulum-associated degradation (ERAD) that mediates ubiquitin-dependent degradation of misfolded endoplasmic reticulum proteins. By controlling the steady-state expression of the IGF1R receptor, indirectly regulates the insulin-like growth factor receptor signaling pathway. Involved in inhibition of lipid droplet degradation by binding to phospholipase PNPL2 and inhibiting its activity by promoting dissociation of PNPL2 from its endogenous activator, ABHD5 which inhibits the rate of triacylglycerol hydrolysis. Involved in stress granule disassembly: associates with ubiquitinated G3BP1 in response to heat shock, thereby promoting interaction between ubiquitinated G3BP1 and VCP, followed by G3BP1 extraction from stress granules and stress granule disassembly. The sequence is that of FAS-associated factor 2 (FAF2) from Bos taurus (Bovine).